A 341-amino-acid chain; its full sequence is MDYRSAGVDVAAGRAFVEQIRPLVQRTQRPEVVGGLGGFAGLCQIPKGYRQPLLVSGTDGVGTKLKLAQALDRHNTVGIDLVAMCVNDVLTCGAEPLFFLDYIACGRLAPEMMNAVVAGIAQGCEAAGCALLGGETAEMPGFYAEGVYDLAGFCVGVVEQDQVLDGTQVQVGDVVLGLASSGLHSNGFSLVRKIVSDRQLSWQDTPLGPTSLGELCLEPTRIYVQPIRAALSQGIPIHGMAHITGGGLPENLPRCLGQGRSAHLDPQAWPIPPLFHWLGEVGNVSLGELFNTFNMGIGYTVVLPASAVAAAQTCFAKWGIESWPIGTVVAGAGEVLGLPAA.

This sequence belongs to the AIR synthase family.

The protein localises to the cytoplasm. It catalyses the reaction 2-formamido-N(1)-(5-O-phospho-beta-D-ribosyl)acetamidine + ATP = 5-amino-1-(5-phospho-beta-D-ribosyl)imidazole + ADP + phosphate + H(+). It functions in the pathway purine metabolism; IMP biosynthesis via de novo pathway; 5-amino-1-(5-phospho-D-ribosyl)imidazole from N(2)-formyl-N(1)-(5-phospho-D-ribosyl)glycinamide: step 2/2. The protein is Phosphoribosylformylglycinamidine cyclo-ligase of Thermosynechococcus vestitus (strain NIES-2133 / IAM M-273 / BP-1).